The primary structure comprises 228 residues: Vesicle transport protein SEC20 (228 aa).

The Cytoplasmic portion of the chain corresponds to 1-199 (MAAPQDVHVR…LITKYNRREL (199 aa)). A coiled-coil region spans residues 37–90 (LSELTELNTKVKEKFQQLKQRIQELEQSAREQDKESEKQLLLQEVENHKKQMLS). A helical; Anchor for type IV membrane protein transmembrane segment spans residues 200–220 (TDKLLIFLALALFLATVLYIV). Residues 221-228 (KKRLFPFL) lie on the Lumenal side of the membrane.

This sequence belongs to the SEC20 family. In terms of assembly, component of a SNARE complex consisting of STX18, USE1L, BNIP1/SEC20L and SEC22B. Interacts directly with STX18, RINT1/TIP20L and NAPA. Interacts with ZW10 through RINT1. Interacts with BCL2. Interacts with RNF186. Interacts with RNF185. Interacts with SQSTM1; increased by 'Lys-63'-linked polyubiquitination of BNIP1. Post-translationally, polyubiquitinated. 'Lys-63'-linked polyubiquitination by RNF185 increases the interaction with the autophagy receptor SQSTM1. Undergoes 'Lys-29'- and 'Lys-63'-linked polyubiquitination by RNF186 that may regulate BNIP1 localization to the mitochondrion.

It is found in the endoplasmic reticulum membrane. The protein localises to the mitochondrion membrane. As part of a SNARE complex may be involved in endoplasmic reticulum membranes fusion and be required for the maintenance of endoplasmic reticulum organization. Also plays a role in apoptosis. It is for instance required for endoplasmic reticulum stress-induced apoptosis. As a substrate of RNF185 interacting with SQSTM1, might also be involved in mitochondrial autophagy. The sequence is that of Vesicle transport protein SEC20 from Mus musculus (Mouse).